Consider the following 485-residue polypeptide: Neuropeptide F receptor (485 aa).

Over 1–91 (MIISMNQTEP…DSPWYHMLIS (91 aa)) the chain is Extracellular. A helical membrane pass occupies residues 92–112 (MYGVLIVFGALGNTLVVIAVI). The Cytoplasmic segment spans residues 113–122 (RKPIMRTARN). The chain crosses the membrane as a helical span at residues 123-143 (LFILNLAISDLLLCLVTMPLT). Residues 144–163 (LMEILSKYWPYGSCSILCKT) lie on the Extracellular side of the membrane. The cysteines at positions 161 and 248 are disulfide-linked. The chain crosses the membrane as a helical span at residues 164–184 (IAMLQALCIFVSTISITAIAF). Over 185 to 202 (DRYQVIVYPTRDSLQFVG) the chain is Cytoplasmic. A helical transmembrane segment spans residues 203-223 (AVTILAGIWALALLLASPLFV). The Extracellular portion of the chain corresponds to 224 to 262 (YKELINTDTPALLQQIGLQDTIPYCIEDWPSRNGRFYYS). The helical transmembrane segment at 263-283 (IFSLCVQYLVPILIVSVAYFG) threads the bilayer. Residues 284-317 (IYNKLKSRITVVAVQASSAQRKVERGRRMKRTNC) are Cytoplasmic-facing. A helical membrane pass occupies residues 318–338 (LLISIAIIFGVSWLPLNFFNL). Residues 339–355 (YADMERSPVTQSMLVRY) are Extracellular-facing. A helical membrane pass occupies residues 356–376 (AICHMIGMSSACSNPLLYGWL). Over 377–485 (NDNFRKEFQE…PSEVTKLMPR (109 aa)) the chain is Cytoplasmic.

Belongs to the G-protein coupled receptor 1 family. Expressed in midgut, brain lobes and ventral nerve cord of larvae. In adults, expressed in a pair of dorsolateral neurons in the protocerebrum, and the central complex and a small number of neurons in the subesophageal ganglion (at protein level). Expressed in a subset of sugar-responsive PAIN neurons in the thoracic body but is absent from other peripheral PAIN neurons.

The protein resides in the membrane. Its function is as follows. Receptor for NPF. Integral part of the sensory system that mediates food signaling, providing the neural basis for the regulation of food response; coordinates larval foraging and social behavior changes during development. Required in dopaminergic (DA) neurons that innervate the mushroom body for satiety to suppress appetitive memory performance; a key factor in the internal state of hunger in the brain. NPF neurons coordinately modulate diverse sensory and motor neurons important for feeding, flight, and locomotion. NPF/NPFR pathway exerts its suppressive effect on larval aversion to diverse stressful stimuli (chemical stress and noxious heat) through attenuation of TRP channel-induced neuronal excitation. NPF neural signaling system plays a physiological role in acute modulation of alcohol sensitivity in adults, rather than a general response to intoxication by sedative agents. Activation and inhibition of the NPF system reduces and enhances ethanol preference, respectively. Sexual experience, the NPF system activity and ethanol consumption are all linked; sexual deprivation is a major contributor to enhanced ethanol preference. The chain is Neuropeptide F receptor from Drosophila melanogaster (Fruit fly).